The following is a 303-amino-acid chain: Protein translocase subunit SecF (303 aa).

The next 6 helical transmembrane spans lie at 28–48 (SIIL…NFGI), 140–160 (IEAG…YIWV), 164–184 (WYFG…ALGF), 194–214 (LSTI…SVVI), 246–266 (ILTV…GGEA), and 272–292 (VLVF…SAPI).

The protein belongs to the SecD/SecF family. SecF subfamily. Forms a complex with SecD. Part of the essential Sec protein translocation apparatus which comprises SecA, SecYEG and auxiliary proteins SecDF-YajC and YidC.

The protein resides in the cell inner membrane. In terms of biological role, part of the Sec protein translocase complex. Interacts with the SecYEG preprotein conducting channel. SecDF uses the proton motive force (PMF) to complete protein translocation after the ATP-dependent function of SecA. This is Protein translocase subunit SecF from Rickettsia bellii (strain OSU 85-389).